The sequence spans 144 residues: Large ribosomal subunit protein uL14 (144 aa).

It belongs to the universal ribosomal protein uL14 family. Part of the 50S ribosomal subunit. Forms a cluster with proteins L3 and L24e, part of which may contact the 16S rRNA in 2 intersubunit bridges.

In terms of biological role, binds to 23S rRNA. Forms part of two intersubunit bridges in the 70S ribosome. In Pyrobaculum aerophilum (strain ATCC 51768 / DSM 7523 / JCM 9630 / CIP 104966 / NBRC 100827 / IM2), this protein is Large ribosomal subunit protein uL14.